The primary structure comprises 375 residues: Erythronate-4-phosphate dehydrogenase (375 aa).

S49 contacts substrate. Residues D150 and T178 each contribute to the NAD(+) site. Residue R211 is part of the active site. An NAD(+)-binding site is contributed by D231. Residue E236 is part of the active site. The Proton donor role is filled by H253. G256 contributes to the NAD(+) binding site.

The protein belongs to the D-isomer specific 2-hydroxyacid dehydrogenase family. PdxB subfamily. As to quaternary structure, homodimer.

It is found in the cytoplasm. It catalyses the reaction 4-phospho-D-erythronate + NAD(+) = (R)-3-hydroxy-2-oxo-4-phosphooxybutanoate + NADH + H(+). Its pathway is cofactor biosynthesis; pyridoxine 5'-phosphate biosynthesis; pyridoxine 5'-phosphate from D-erythrose 4-phosphate: step 2/5. In terms of biological role, catalyzes the oxidation of erythronate-4-phosphate to 3-hydroxy-2-oxo-4-phosphonooxybutanoate. The protein is Erythronate-4-phosphate dehydrogenase of Hydrogenovibrio crunogenus (strain DSM 25203 / XCL-2) (Thiomicrospira crunogena).